The sequence spans 168 residues: NADH dehydrogenase [ubiquinone] 1 alpha subcomplex assembly factor 2 (168 aa).

Residues 108 to 118 (KEKLLQEESNK) show a composition bias toward basic and acidic residues. The tract at residues 108-168 (KEKLLQEESN…MPHGDKGHSQ (61 aa)) is disordered. Ser133 is subject to Phosphoserine. A compositionally biased stretch (polar residues) spans 144–155 (ESPTSTGKTFQP).

The protein belongs to the complex I NDUFA12 subunit family. Interacts with ARMC9.

The protein resides in the mitochondrion. Its function is as follows. Acts as a molecular chaperone for mitochondrial complex I assembly. Complex I functions in the transfer of electrons from NADH to the respiratory chain. The immediate electron acceptor for the enzyme is believed to be ubiquinone. Is involved in the initial steps of cilia formation, including removal of CP110 from the mother centrioles, docking of membrane vesicles to the mother centrioles, and establishment of the transition zone. This is NADH dehydrogenase [ubiquinone] 1 alpha subcomplex assembly factor 2 (NDUFAF2) from Bos taurus (Bovine).